Consider the following 274-residue polypeptide: Prolyl 4-hydroxylase 13 (274 aa).

At 1–10 (MRSYGKEKKL) the chain is on the cytoplasmic side. The chain crosses the membrane as a helical; Signal-anchor for type II membrane protein span at residues 11 to 31 (VFPYVFIACCFFLAIFGFCFF). Topologically, residues 32–274 (NLFSQGISFS…TKWIRDQTYD (243 aa)) are lumenal. The Fe2OG dioxygenase domain occupies 151–270 (YYESFNILRY…KWVATKWIRD (120 aa)). Residues His-169 and Asp-171 each contribute to the Fe cation site. An N-linked (GlcNAc...) asparagine glycan is attached at Asn-242. His-251 serves as a coordination point for Fe cation. Residue Lys-261 coordinates 2-oxoglutarate.

This sequence belongs to the P4HA family. Fe(2+) serves as cofactor. L-ascorbate is required as a cofactor. In terms of tissue distribution, expressed in epidermal root hair cells (trichoblasts) root hairless cells (atrichoblasts).

It localises to the endoplasmic reticulum membrane. It carries out the reaction L-prolyl-[collagen] + 2-oxoglutarate + O2 = trans-4-hydroxy-L-prolyl-[collagen] + succinate + CO2. Functionally, catalyzes the post-translational formation of 4-hydroxyproline in -Xaa-Pro-Gly- sequences in proline-rich peptide sequences of plant glycoproteins and other proteins. Hydroxyprolines are important constituent of many plant cell wall glycoproteins such as extensins, hydroxyproline-rich glycoproteins, lectins and arabinogalactan proteins. Possesses high affinity for leucine-rich repeat and proline-rich extensins of root cell walls that are essential for root hair development. Hydroxyprolines define the subsequent O-glycosylation sites by arabinosyltransferases which elongate the O-arabinosides on extensins. The chain is Prolyl 4-hydroxylase 13 from Arabidopsis thaliana (Mouse-ear cress).